Here is a 154-residue protein sequence, read N- to C-terminus: MTHYEGDLRPPTARFAIIASRWNARITDVLVAGARQSLAGNGIGEDAIDVIRVPGAWEIPVAANRVAQSGQHGAIIALGCVIRGDTRHYEHVADLCAEGLMSVQLQTGVPVLNGVLAVERVEDAEARAGGSHGNKGEECALAALELVNLMELLP.

5-amino-6-(D-ribitylamino)uracil is bound by residues Trp22, 56–58, and 80–82; these read AWE and CVI. Residue 85 to 86 coordinates (2S)-2-hydroxy-3-oxobutyl phosphate; the sequence is DT. Residue His88 is the Proton donor of the active site. A 5-amino-6-(D-ribitylamino)uracil-binding site is contributed by Asn113. Arg127 is a binding site for (2S)-2-hydroxy-3-oxobutyl phosphate.

This sequence belongs to the DMRL synthase family. As to quaternary structure, forms an icosahedral capsid composed of 60 subunits, arranged as a dodecamer of pentamers.

The catalysed reaction is (2S)-2-hydroxy-3-oxobutyl phosphate + 5-amino-6-(D-ribitylamino)uracil = 6,7-dimethyl-8-(1-D-ribityl)lumazine + phosphate + 2 H2O + H(+). It participates in cofactor biosynthesis; riboflavin biosynthesis; riboflavin from 2-hydroxy-3-oxobutyl phosphate and 5-amino-6-(D-ribitylamino)uracil: step 1/2. Functionally, catalyzes the formation of 6,7-dimethyl-8-ribityllumazine by condensation of 5-amino-6-(D-ribitylamino)uracil with 3,4-dihydroxy-2-butanone 4-phosphate. This is the penultimate step in the biosynthesis of riboflavin. The sequence is that of 6,7-dimethyl-8-ribityllumazine synthase from Xanthomonas oryzae pv. oryzae (strain MAFF 311018).